Consider the following 422-residue polypeptide: Lipase member M (422 aa).

An N-terminal signal peptide occupies residues 1–33; sequence MSEILSRVWTVSHRVEIWLLILVAYLLQRNVNS. N-linked (GlcNAc...) asparagine glycosylation occurs at Asn-48. In terms of domain architecture, AB hydrolase-1 spans 92-392; sequence PVVLLQHGLL…EWAHVDFIWG (301 aa). Residue Ser-186 is the Nucleophile of the active site. Cys-260 and Cys-269 are joined by a disulfide. Catalysis depends on charge relay system residues Asp-357 and His-386.

The protein belongs to the AB hydrolase superfamily. Lipase family.

It localises to the secreted. In terms of biological role, plays a highly specific role in the last step of keratinocyte differentiation. May have an essential function in lipid metabolism of the most differentiated epidermal layers. The chain is Lipase member M (Lipm) from Mus musculus (Mouse).